The following is an 880-amino-acid chain: Alanine--tRNA ligase (880 aa).

The Zn(2+) site is built by histidine 568, histidine 572, cysteine 670, and histidine 674.

Belongs to the class-II aminoacyl-tRNA synthetase family. Requires Zn(2+) as cofactor.

Its subcellular location is the cytoplasm. It carries out the reaction tRNA(Ala) + L-alanine + ATP = L-alanyl-tRNA(Ala) + AMP + diphosphate. Functionally, catalyzes the attachment of alanine to tRNA(Ala) in a two-step reaction: alanine is first activated by ATP to form Ala-AMP and then transferred to the acceptor end of tRNA(Ala). Also edits incorrectly charged Ser-tRNA(Ala) and Gly-tRNA(Ala) via its editing domain. The polypeptide is Alanine--tRNA ligase (Enterococcus faecalis (strain ATCC 700802 / V583)).